A 206-amino-acid polypeptide reads, in one-letter code: Large ribosomal subunit protein bL25 (206 aa).

A disordered region spans residues 184–206; the sequence is AEEAAAEVAEPEVIKKGKEEEEE. Residues 195-206 show a composition bias toward basic and acidic residues; sequence EVIKKGKEEEEE.

The protein belongs to the bacterial ribosomal protein bL25 family. CTC subfamily. As to quaternary structure, part of the 50S ribosomal subunit; part of the 5S rRNA/L5/L18/L25 subcomplex. Contacts the 5S rRNA. Binds to the 5S rRNA independently of L5 and L18.

Its function is as follows. This is one of the proteins that binds to the 5S RNA in the ribosome where it forms part of the central protuberance. The sequence is that of Large ribosomal subunit protein bL25 from Thermus thermophilus (strain ATCC BAA-163 / DSM 7039 / HB27).